The chain runs to 242 residues: MLIDWILKNIMDMDQEDQSGKTQWTKYYLTVYFSGLFNFLMILILSVLFGTLSETFIVYVVLIFLRPVAGGWHAKTKWLCRLESIVIYVAIPFVLKNSSVSLPFIYKILLICLLVVLFYWYAPQGTAIEPVQPSDLNVLKKQSLIRVCLLILCSLFVKEKIASVILYGLVIQGLMILPVTKNLIEGSVFMKFGKKIIKNVIEKRVAKVSDGVGTKPRLNQNSPNIFGQWMGQTEKPKKNIEK.

The next 5 helical transmembrane spans lie at 29-49, 52-72, 78-95, 100-120, and 160-180; these read LTVY…SVLF, LSET…AGGW, WLCR…PFVL, VSLP…LFYW, and KIAS…LPVT.

The protein belongs to the AgrB family.

Its subcellular location is the cell membrane. May be involved in the proteolytic processing of a quorum sensing system signal molecule precursor required for the regulation of the virulence genes for gelatinase (gelE) and a serine protease (sprE). This Enterococcus faecalis (strain ATCC 47077 / OG1RF) protein is Protein FsrB (fsrB).